Here is a 580-residue protein sequence, read N- to C-terminus: MSEITSTDARAQPEKKDFIRQIIREDLAHGTHTHIRTRFPPEPNGYLHIGHAKAICLDFGVAAEFGGHCTLRMDDTNPSKEDPAFAAAIQDDVSWLGFHWNALRHTSDYFEVLYLAAEKLITDGKAYVCDLNSEQVREYRGTLTEAGRPSPWRERSPDENLELFRQMRAGTFPDGTRTLRAKIDMASGNINLRDPALYRIKHVEHQNTGNTWPIYPMYDFAHALSDAIEGITHSLCTLEFEDHRPLYDWCVNHVDLPNNSHLLKPLLDKGFPQEPSQPRQIEFSRLNINYTVMSKRKLTALVDEKLVEGWDDPRMYTLQGLRRRGYTPAAMRLFVERIGISKQNSIIDFSVLENCLRENLDTIAPRRMATIAPLKLVLTNLPEDHEEQLIFPNHPKDDTQGTRTMPFSRELWIERDDFSEIPPKGWKRLVPGGEVRLRGAGIARVDEVVKNAAGDIIALHGWLDPTSRPGMEGAHRKVKGTIHWVSAPHAVAAEIRLYDRLFSVEKPDDNTDGKTYRDVLNPDSKRVVHGYIEPAAAQTAPEHAFQFERLGYFVTDRHDHDAAHPVFNRSVTLRDTWQRD.

Positions 41–51 match the 'HIGH' region motif; sequence PEPNGYLHIGH. ATP contacts are provided by residues 42–44 and 48–54; these read EPN and HIGHAKA. Residues Asp-74 and Tyr-218 each coordinate L-glutamine. ATP is bound by residues Thr-237, 285–286, and 293–295; these read RL and MSK. Positions 292–296 match the 'KMSKS' region motif; sequence VMSKR.

Belongs to the class-I aminoacyl-tRNA synthetase family. As to quaternary structure, monomer.

It localises to the cytoplasm. It carries out the reaction tRNA(Gln) + L-glutamine + ATP = L-glutaminyl-tRNA(Gln) + AMP + diphosphate. This chain is Glutamine--tRNA ligase, found in Xylella fastidiosa (strain 9a5c).